Here is a 225-residue protein sequence, read N- to C-terminus: Transmembrane protein C16orf54 homolog (225 aa).

The helical transmembrane segment at 32-52 (PCIPIMLGLASLTAFFIITTA) threads the bilayer. Disordered stretches follow at residues 106-163 (DRAP…ERPH) and 178-200 (EAGL…EPDW). Residues Thr113 and Thr117 each carry the phosphothreonine modification. The span at 122–140 (ATAPPATSAPYSSLSSLVP) shows a compositional bias: low complexity. Position 195 is a phosphoserine (Ser195).

The protein localises to the membrane. This is Transmembrane protein C16orf54 homolog from Mus musculus (Mouse).